A 130-amino-acid polypeptide reads, in one-letter code: Keratin, high-sulfur matrix protein, IIIA3A (130 aa).

As to expression, wool.

The keratin products of mammalian epidermal derivatives such as wool and hair consist of microfibrils embedded in a rigid matrix of other proteins. The matrix proteins include the high-sulfur and high-tyrosine keratins, having molecular weights of 6-20 kDa, whereas the microfibrils contain the larger, low-sulfur keratins (40-56 kDa). This is Keratin, high-sulfur matrix protein, IIIA3A from Ovis aries (Sheep).